The primary structure comprises 597 residues: Bile salt-activated lipase (597 aa).

Residues 1 to 18 (LGASRLGPSPGCLAVASA) form the signal peptide. Residues cysteine 82 and cysteine 98 are joined by a disulfide bond. An N-linked (GlcNAc...) asparagine glycan is attached at asparagine 205. Residue serine 212 is the Acyl-ester intermediate of the active site. Cysteines 264 and 275 form a disulfide. The active-site Charge relay system is aspartate 338. The N-linked (GlcNAc...) asparagine glycan is linked to asparagine 379. The active-site Charge relay system is the histidine 453. The disordered stretch occupies residues 553–591 (AGASLLPPEDNSQASPVPPADNSGAPTEPSAGDSEVAQM).

It belongs to the type-B carboxylesterase/lipase family. In terms of assembly, interacts with CLC.

Its subcellular location is the secreted. The catalysed reaction is a triacylglycerol + H2O = a diacylglycerol + a fatty acid + H(+). The enzyme catalyses 1,2,3-tri-(9Z-octadecenoyl)-glycerol + H2O = di-(9Z)-octadecenoylglycerol + (9Z)-octadecenoate + H(+). It carries out the reaction 1,2,3-trioctanoylglycerol + H2O = dioctanoylglycerol + octanoate + H(+). It catalyses the reaction a sterol ester + H2O = a sterol + a fatty acid + H(+). The catalysed reaction is cholesteryl (9Z-octadecenoate) + H2O = cholesterol + (9Z)-octadecenoate + H(+). The enzyme catalyses an acetyl ester + H2O = an aliphatic alcohol + acetate + H(+). It carries out the reaction a butanoate ester + H2O = an aliphatic alcohol + butanoate + H(+). It catalyses the reaction 9-hexadecanoyloxy-octadecanoate + H2O = 9-hydroxy-octadecanoate + hexadecanoate + H(+). The catalysed reaction is 9-(9Z-octadecenoyloxy)-octadecanoate + H2O = 9-hydroxy-octadecanoate + (9Z)-octadecenoate + H(+). The enzyme catalyses 1-hexadecanoyl-sn-glycero-3-phosphocholine + H2O = sn-glycerol 3-phosphocholine + hexadecanoate + H(+). It carries out the reaction 12-hexadecanoyloxy-octadecanoate + H2O = 12-hydroxyoctadecanoate + hexadecanoate + H(+). It catalyses the reaction 12-(9Z-octadecenoyloxy)-octadecanoate + H2O = 12-hydroxyoctadecanoate + (9Z)-octadecenoate + H(+). The catalysed reaction is 13-(9Z-octadecenoyloxy)-octadecanoate + H2O = 13-hydroxy-octadecanoate + (9Z)-octadecenoate + H(+). The enzyme catalyses 9-(9Z-hexadecenoyloxy)-octadecanoate + H2O = (9Z)-hexadecenoate + 9-hydroxy-octadecanoate + H(+). It carries out the reaction 12-(9Z-hexadecenoyloxy)-octadecanoate + H2O = 12-hydroxyoctadecanoate + (9Z)-hexadecenoate + H(+). It catalyses the reaction 13-(9Z-hexadecenoyloxy)-octadecanoate + H2O = 13-hydroxy-octadecanoate + (9Z)-hexadecenoate + H(+). The catalysed reaction is 12-octadecanoyloxy-octadecanoate + H2O = 12-hydroxyoctadecanoate + octadecanoate + H(+). The enzyme catalyses 13-octadecanoyloxy-octadecanoate + H2O = 13-hydroxy-octadecanoate + octadecanoate + H(+). It carries out the reaction 5-(9Z-hexadecenoyloxy)-octadecanoate + H2O = 5-hydroxy-octadecanoate + (9Z)-hexadecenoate + H(+). It catalyses the reaction 9-octadecanoyloxy-octadecanoate + H2O = 9-hydroxy-octadecanoate + octadecanoate + H(+). Activated by bile salts such as sodium taurocholate. Catalyzes the hydrolysis of a wide range of substrates including cholesteryl esters, phospholipids, lysophospholipids, di- and tri-acylglycerols, and fatty acid esters of hydroxy fatty acids (FAHFA). Preferentially hydrolyzes FAHFAs with the ester bond further away from the carboxylate. Unsaturated FAHFAs are hydrolyzed more quickly than saturated FAHFAs. Has an essential role in the complete digestion of dietary lipids and their intestinal absorption, along with the absorption of fat-soluble vitamins. This chain is Bile salt-activated lipase (CEL), found in Bos taurus (Bovine).